Reading from the N-terminus, the 2346-residue chain is Acetyl-CoA carboxylase 1 (2346 aa).

At Met1 the chain carries N-acetylmethionine. Residues Ser5, Ser23, Ser25, Ser29, Ser34, Ser48, Ser50, and Ser53 each carry the phosphoserine modification. Thr58 bears the Phosphothreonine mark. The residue at position 78 (Ser78) is a Phosphoserine. Ser80 carries the post-translational modification Phosphoserine; by AMPK. Positions 117 to 618 (VIEKVLIANN…DTGWLDRLIA (502 aa)) constitute a Biotin carboxylation domain. Residues 275–466 (SKRILNVPQE…LPAAQLQIAM (192 aa)) enclose the ATP-grasp domain. 315 to 320 (GGGGKG) contributes to the ATP binding site. Mg(2+) is bound by residues Glu424, Glu437, and Asn439. Residues Glu424, Glu437, and Asn439 each coordinate Mn(2+). Arg441 is an active-site residue. Phosphothreonine is present on Thr610. Residues 745 to 819 (FEKENDPSVL…DPGCVIAKMQ (75 aa)) form the Biotinyl-binding domain. N6-biotinyllysine is present on Lys786. A phosphoserine mark is found at Ser835, Ser1201, Ser1216, and Ser1218. Position 1227 is a phosphothreonine (Thr1227). Ser1259, Ser1263, and Ser1273 each carry phosphoserine. Position 1334 is an N6-acetyllysine (Lys1334). A CoA carboxyltransferase N-terminal domain is found at 1576-1914 (PYVTKDLLQS…SVYSSVPLLN (339 aa)). The carboxyltransferase stretch occupies residues 1576 to 2234 (PYVTKDLLQS…EDLVKKKIHN (659 aa)). Positions 1823, 2127, and 2129 each coordinate CoA. The region spanning 1918–2234 (PIDRVIEFVP…EDLVKKKIHN (317 aa)) is the CoA carboxyltransferase C-terminal domain. At Thr2153 the chain carries Phosphothreonine.

In terms of assembly, monomer, homodimer, and homotetramer. Can form filamentous polymers. Interacts in its inactive phosphorylated form with the BRCT domains of BRCA1 which prevents ACACA dephosphorylation and inhibits lipid synthesis. Interacts with MID1IP1; interaction with MID1IP1 promotes oligomerization and increases its activity. Mg(2+) serves as cofactor. It depends on Mn(2+) as a cofactor. Requires biotin as cofactor. Post-translationally, phosphorylation on Ser-1263 is required for interaction with BRCA1. Phosphorylation at Ser-80 by AMPK inactivates enzyme activity. In terms of processing, the biotin cofactor is covalently attached to the central biotinyl-binding domain and is required for the catalytic activity. As to expression, expressed at high levels in mammary gland.

Its subcellular location is the cytoplasm. It localises to the cytosol. It catalyses the reaction hydrogencarbonate + acetyl-CoA + ATP = malonyl-CoA + ADP + phosphate + H(+). It functions in the pathway lipid metabolism; malonyl-CoA biosynthesis; malonyl-CoA from acetyl-CoA: step 1/1. Inhibited by phosphorylation. Citrate promotes oligomerization of the protein into filaments that correspond to the most active form of the carboxylase. In terms of biological role, cytosolic enzyme that catalyzes the carboxylation of acetyl-CoA to malonyl-CoA, the first and rate-limiting step of de novo fatty acid biosynthesis. This is a 2 steps reaction starting with the ATP-dependent carboxylation of the biotin carried by the biotin carboxyl carrier (BCC) domain followed by the transfer of the carboxyl group from carboxylated biotin to acetyl-CoA. This is Acetyl-CoA carboxylase 1 from Ovis aries (Sheep).